The chain runs to 425 residues: Serine--tRNA ligase (425 aa).

233-235 (TAE) contacts L-serine. ATP is bound at residue 264–266 (RRE). E287 provides a ligand contact to L-serine. An ATP-binding site is contributed by 351–354 (EISS). Residue S385 coordinates L-serine.

Belongs to the class-II aminoacyl-tRNA synthetase family. Type-1 seryl-tRNA synthetase subfamily. As to quaternary structure, homodimer. The tRNA molecule binds across the dimer.

The protein localises to the cytoplasm. It catalyses the reaction tRNA(Ser) + L-serine + ATP = L-seryl-tRNA(Ser) + AMP + diphosphate + H(+). The catalysed reaction is tRNA(Sec) + L-serine + ATP = L-seryl-tRNA(Sec) + AMP + diphosphate + H(+). It functions in the pathway aminoacyl-tRNA biosynthesis; selenocysteinyl-tRNA(Sec) biosynthesis; L-seryl-tRNA(Sec) from L-serine and tRNA(Sec): step 1/1. Its function is as follows. Catalyzes the attachment of serine to tRNA(Ser). Is also able to aminoacylate tRNA(Sec) with serine, to form the misacylated tRNA L-seryl-tRNA(Sec), which will be further converted into selenocysteinyl-tRNA(Sec). In Prochlorococcus marinus (strain AS9601), this protein is Serine--tRNA ligase.